A 497-amino-acid chain; its full sequence is Arabinose import ATP-binding protein AraG (497 aa).

ABC transporter domains follow at residues 6–242 (LRFD…MVGR) and 250–497 (FRPR…ALPA). Residue 38–45 (GENGAGKS) coordinates ATP.

This sequence belongs to the ABC transporter superfamily. Arabinose importer (TC 3.A.1.2.2) family. In terms of assembly, the complex is composed of two ATP-binding proteins (AraG), two transmembrane proteins (AraH) and a solute-binding protein (AraF).

Its subcellular location is the cell inner membrane. The catalysed reaction is L-arabinose(out) + ATP + H2O = L-arabinose(in) + ADP + phosphate + H(+). Its function is as follows. Part of the ABC transporter complex AraFGH involved in arabinose import. Responsible for energy coupling to the transport system. The polypeptide is Arabinose import ATP-binding protein AraG (Chromohalobacter salexigens (strain ATCC BAA-138 / DSM 3043 / CIP 106854 / NCIMB 13768 / 1H11)).